The chain runs to 415 residues: Peptide chain release factor subunit 1-2 (415 aa).

It belongs to the eukaryotic release factor 1 family. As to quaternary structure, heterodimer of two subunits, one of which binds GTP.

It is found in the cytoplasm. Functionally, directs the termination of nascent peptide synthesis (translation) in response to the termination codons UAA, UAG and UGA. The chain is Peptide chain release factor subunit 1-2 from Methanosarcina acetivorans (strain ATCC 35395 / DSM 2834 / JCM 12185 / C2A).